Reading from the N-terminus, the 158-residue chain is Putative pre-16S rRNA nuclease (158 aa).

It belongs to the YqgF nuclease family.

It is found in the cytoplasm. Functionally, could be a nuclease involved in processing of the 5'-end of pre-16S rRNA. The sequence is that of Putative pre-16S rRNA nuclease from Acidiphilium cryptum (strain JF-5).